The following is a 350-amino-acid chain: Hydroxymethylglutaryl-CoA synthase (350 aa).

A (3S)-3-hydroxy-3-methylglutaryl-CoA-binding site is contributed by aspartate 30. Glutamate 82 (proton donor/acceptor) is an active-site residue. Residues cysteine 114, serine 155, threonine 203, and histidine 236 each coordinate (3S)-3-hydroxy-3-methylglutaryl-CoA. Cysteine 114 functions as the Acyl-thioester intermediate in the catalytic mechanism. Histidine 236 acts as the Proton donor/acceptor in catalysis. Arginine 241 contacts CoA. (3S)-3-hydroxy-3-methylglutaryl-CoA is bound by residues arginine 245, asparagine 268, and serine 298.

It belongs to the thiolase-like superfamily. Archaeal HMG-CoA synthase family. As to quaternary structure, interacts with acetoacetyl-CoA thiolase that catalyzes the precedent step in the pathway and with a DUF35 protein. The acetoacetyl-CoA thiolase/HMG-CoA synthase complex channels the intermediate via a fused CoA-binding site, which allows for efficient coupling of the endergonic thiolase reaction with the exergonic HMGCS reaction.

It catalyses the reaction acetoacetyl-CoA + acetyl-CoA + H2O = (3S)-3-hydroxy-3-methylglutaryl-CoA + CoA + H(+). The protein operates within metabolic intermediate biosynthesis; (R)-mevalonate biosynthesis; (R)-mevalonate from acetyl-CoA: step 2/3. Its function is as follows. Catalyzes the condensation of acetyl-CoA with acetoacetyl-CoA to form 3-hydroxy-3-methylglutaryl-CoA (HMG-CoA). Functions in the mevalonate (MVA) pathway leading to isopentenyl diphosphate (IPP), a key precursor for the biosynthesis of isoprenoid compounds that are building blocks of archaeal membrane lipids. The chain is Hydroxymethylglutaryl-CoA synthase from Pyrobaculum aerophilum (strain ATCC 51768 / DSM 7523 / JCM 9630 / CIP 104966 / NBRC 100827 / IM2).